The following is a 220-amino-acid chain: Uracil-DNA glycosylase (220 aa).

D60 acts as the Proton acceptor in catalysis.

It belongs to the uracil-DNA glycosylase (UDG) superfamily. UNG family.

It localises to the cytoplasm. It carries out the reaction Hydrolyzes single-stranded DNA or mismatched double-stranded DNA and polynucleotides, releasing free uracil.. Excises uracil residues from the DNA which can arise as a result of misincorporation of dUMP residues by DNA polymerase or due to deamination of cytosine. This chain is Uracil-DNA glycosylase, found in Francisella tularensis subsp. novicida (strain U112).